A 490-amino-acid polypeptide reads, in one-letter code: Fumitremorgin C monooxygenase (490 aa).

Residues 12-32 form a helical membrane-spanning segment; sequence LGVVGASLIVILGIILLFPLG. Heme is bound at residue Cys-442.

It belongs to the cytochrome P450 family. Requires heme as cofactor.

It localises to the membrane. The enzyme catalyses fumitremorgin C + 2 reduced [NADPH--hemoprotein reductase] + 2 O2 = 12alpha,13alpha-dihydroxyfumitremorgin C + 2 oxidized [NADPH--hemoprotein reductase] + 2 H2O + 2 H(+). It participates in mycotoxin biosynthesis. Its function is as follows. Cytochrome P450 monooxygenase; part of the gene cluster that mediates the biosynthesis of fumitremorgins, indole alkaloids that carry not only intriguing chemical structures, but also interesting biological and pharmacological activities. The biosynthesis of fumitremorgin-type alkaloids begins by condensation of the two amino acids L-tryptophan and L-proline to brevianamide F, catalyzed by the non-ribosomal peptide synthetase ftmA. Brevianamide F is then prenylated by the prenyltransferase ftmPT1/ftmB in the presence of dimethylallyl diphosphate, resulting in the formation of tryprostatin B. The three cytochrome P450 monooxygenases, ftmP450-1/ftmC, ftmP450-2/ftmE and ftmP450-3/FtmG, are responsible for the conversion of tryprostatin B to 6-hydroxytryprostatin B, tryprostatin A to fumitremorgin C and fumitremorgin C to 12,13-dihydroxyfumitremorgin C, respectively. The putative methyltransferase ftmMT/ftmD is expected for the conversion of 6-hydroxytryprostatin B to tryprostatin A. FtmPT2/FtmH catalyzes the prenylation of 12,13-dihydroxyfumitre-morgin C in the presence of dimethylallyl diphosphate, resulting in the formation of fumitremorgin B. Fumitremorgin B is further converted to verruculogen by ftmOx1/ftmF via the insertion of an endoperoxide bond between the two prenyl moieties. In some fungal species, verruculogen is further converted to fumitremorgin A, but the enzymes involved in this step have not been identified yet. This chain is Fumitremorgin C monooxygenase, found in Aspergillus fumigatus (strain ATCC MYA-4609 / CBS 101355 / FGSC A1100 / Af293) (Neosartorya fumigata).